The primary structure comprises 405 residues: Tryptophan synthase beta chain (405 aa).

Lys-95 carries the post-translational modification N6-(pyridoxal phosphate)lysine.

Belongs to the TrpB family. In terms of assembly, tetramer of two alpha and two beta chains. Requires pyridoxal 5'-phosphate as cofactor.

It carries out the reaction (1S,2R)-1-C-(indol-3-yl)glycerol 3-phosphate + L-serine = D-glyceraldehyde 3-phosphate + L-tryptophan + H2O. It functions in the pathway amino-acid biosynthesis; L-tryptophan biosynthesis; L-tryptophan from chorismate: step 5/5. Its function is as follows. The beta subunit is responsible for the synthesis of L-tryptophan from indole and L-serine. This Pseudomonas putida (strain W619) protein is Tryptophan synthase beta chain.